A 70-amino-acid chain; its full sequence is Conotoxin elongated-tx3a-a (70 aa).

A signal peptide spans 1 to 24 (MLKMGVVLFIFLVLFPLATLQLDA). The propeptide occupies 25–44 (DQPVERYAENKQLLSPDERR). 3 disulfide bridges follow: C55–C68, C56–C66, and C61–C69. A 6'-bromotryptophan; partial modification is found at W58. C69 is modified (cysteine amide; partial).

This sequence belongs to the conotoxin M superfamily. In terms of processing, two short peptides are produced from this precursor; Conotoxin tx3a-b is amidated at Cys-69 (but has no bromotryptophan), whereas conotoxin tx3a-a has an unmodified Gly-70 and a bromotryptophan. Two elongated peptides are also produced; Conotoxin elongated-tx3a-b is amidated at Cys-69 (but has no bromotryptophan), whereas conotoxin elongated tx3a-a has an unmodified Gly-70 (but has no bromotryptophan). Ju et al. (2022) describe a disulfide connectivity (C55-C61; C56-C69; C66-C68) that differs from that of Han and colleagues (2006), McDougal et al. (2008), and Ueberheide et al. (2009). Expressed by the venom duct. Is present in all duct parts with a highest content in part 2 (proximal of the venom bulb) and then decreases in concentration toward the end of the duct.

It localises to the secreted. Functionally, intracranial injection into mice causes scratching and hyperactivity. In vitro, inhibits proliferation of the mice ovarian cancer cells ID8. The polypeptide is Conotoxin elongated-tx3a-a (Conus textile (Cloth-of-gold cone)).